The sequence spans 504 residues: Glycerol kinase (504 aa).

T14 provides a ligand contact to ADP. ATP is bound by residues T14, T15, and S16. T14 lines the sn-glycerol 3-phosphate pocket. R18 is an ADP binding site. Sn-glycerol 3-phosphate contacts are provided by R84, E85, Y136, and D246. Positions 84, 85, 136, 246, and 247 each coordinate glycerol. Residues T268 and G311 each contribute to the ADP site. Positions 268, 311, 315, and 412 each coordinate ATP. ADP-binding residues include G412 and N416.

The protein belongs to the FGGY kinase family.

It carries out the reaction glycerol + ATP = sn-glycerol 3-phosphate + ADP + H(+). Its pathway is polyol metabolism; glycerol degradation via glycerol kinase pathway; sn-glycerol 3-phosphate from glycerol: step 1/1. With respect to regulation, inhibited by fructose 1,6-bisphosphate (FBP). Its function is as follows. Key enzyme in the regulation of glycerol uptake and metabolism. Catalyzes the phosphorylation of glycerol to yield sn-glycerol 3-phosphate. This is Glycerol kinase from Aliivibrio fischeri (strain ATCC 700601 / ES114) (Vibrio fischeri).